The sequence spans 732 residues: Catalase-peroxidase (732 aa).

The segment at 1–24 (MDAKTDDNSAGKCPVAHGSAGRTN) is disordered. A cross-link (tryptophyl-tyrosyl-methioninium (Trp-Tyr) (with M-245)) is located at residues 96–219 (WHSAGTYRIA…LGAVQMGLIY (124 aa)). Residue His-97 is the Proton acceptor of the active site. The tryptophyl-tyrosyl-methioninium (Tyr-Met) (with W-96) cross-link spans 219 to 245 (YVNPEGPNGNPDPLAAARDIRDTFARM). Position 260 (His-260) interacts with heme b.

It belongs to the peroxidase family. Peroxidase/catalase subfamily. Homodimer or homotetramer. The cofactor is heme b. Post-translationally, formation of the three residue Trp-Tyr-Met cross-link is important for the catalase, but not the peroxidase activity of the enzyme.

It carries out the reaction H2O2 + AH2 = A + 2 H2O. The enzyme catalyses 2 H2O2 = O2 + 2 H2O. Bifunctional enzyme with both catalase and broad-spectrum peroxidase activity. This Mesorhizobium japonicum (strain LMG 29417 / CECT 9101 / MAFF 303099) (Mesorhizobium loti (strain MAFF 303099)) protein is Catalase-peroxidase.